Here is a 359-residue protein sequence, read N- to C-terminus: Nicotinate-nucleotide--dimethylbenzimidazole phosphoribosyltransferase (359 aa).

E318 functions as the Proton acceptor in the catalytic mechanism.

The protein belongs to the CobT family. Homodimer.

The enzyme catalyses 5,6-dimethylbenzimidazole + nicotinate beta-D-ribonucleotide = alpha-ribazole 5'-phosphate + nicotinate + H(+). It functions in the pathway nucleoside biosynthesis; alpha-ribazole biosynthesis; alpha-ribazole from 5,6-dimethylbenzimidazole: step 1/2. Its function is as follows. Catalyzes the synthesis of alpha-ribazole-5'-phosphate from nicotinate mononucleotide (NAMN) and 5,6-dimethylbenzimidazole (DMB). This Escherichia coli O81 (strain ED1a) protein is Nicotinate-nucleotide--dimethylbenzimidazole phosphoribosyltransferase.